Consider the following 568-residue polypeptide: PTS system lactose-specific EIICB component (568 aa).

The PTS EIIC type-3 domain occupies 8–409 (IEKGKPFFEK…LVDTVIYYPF (402 aa)). The next 10 helical transmembrane spans lie at 30 to 50 (GFIS…IAYV), 65 to 85 (MLMT…AGTT), 103 to 123 (INFI…AADP), 128 to 148 (GFLS…AAFI), 183 to 203 (FAFS…VIGV), 222 to 242 (GYLG…VGIH), 246 to 266 (IVEP…AHLI), 283 to 303 (FIVT…FMWL), 339 to 359 (VFFI…KFFV), and 381 to 401 (IVLG…LILV). A PTS EIIB type-3 domain is found at 465 to 568 (ETNVLVLCAG…LAFVEEQFKD (104 aa)). C472 (phosphocysteine intermediate; for EIIB activity) is an active-site residue. C472 bears the Phosphocysteine; by EIIA mark.

It localises to the cell membrane. The catalysed reaction is lactose(out) + N(pros)-phospho-L-histidyl-[protein] = lactose 6-phosphate(in) + L-histidyl-[protein]. Functionally, the phosphoenolpyruvate-dependent sugar phosphotransferase system (sugar PTS), a major carbohydrate active transport system, catalyzes the phosphorylation of incoming sugar substrates concomitantly with their translocation across the cell membrane. The enzyme II LacEF PTS system is involved in lactose transport. The polypeptide is PTS system lactose-specific EIICB component (Streptococcus mutans serotype c (strain ATCC 700610 / UA159)).